Reading from the N-terminus, the 233-residue chain is Small ribosomal subunit protein uS3 (233 aa).

Residues 39-107 (VRQYLNKELA…PAQINIAEVR (69 aa)) enclose the KH type-2 domain.

Belongs to the universal ribosomal protein uS3 family. In terms of assembly, part of the 30S ribosomal subunit. Forms a tight complex with proteins S10 and S14.

In terms of biological role, binds the lower part of the 30S subunit head. Binds mRNA in the 70S ribosome, positioning it for translation. This is Small ribosomal subunit protein uS3 from Cronobacter sakazakii (strain ATCC BAA-894) (Enterobacter sakazakii).